The chain runs to 464 residues: MNTLLVGINVAVMLILVGVLYYMQRKHVSFNKRVFTALGVGIIFGLILQFIYEPTSKVIIESNTWFGLIGNGYVKLLQMIVMPLILVSIISAFTKLQLTKNLGKISGLIIGILILTTGIAAAVGIAASAGFDVSATGLQQGDAESARLKLVEERFTSIEKTTIPDKLLELLPTNPFLDLTGARPTSTISVVIFAAFIGIAFIGVKRKYPEQAELFKKMLDAVYAIVMRMVTLILRLTPYGVLALMAKTVAGSDINAILKLGNFVLASYVALIVMFVIHLLLIALSGLNPIQYLKKVFPVLTFAFTSRSSAGAMPLNIEAQKEKLGISEGIANFAASFGVSIGQNGCAGIYPAMLAMMVAPTVGIDPLQPQFILTLIAVVAISSFGVAGVGGGATFAALIVLSTMNLPIGIVALVISVEPLIDMGRTALNVSGSMTAGLISSKWLGELDQDTYNQDDTKTGEIAS.

A run of 10 helical transmembrane segments spans residues 3–23 (TLLV…LYYM), 34–54 (VFTA…IYEP), 73–93 (YVKL…ISAF), 107–127 (GLII…GIAA), 184–204 (PTST…FIGV), 225–245 (IVMR…LALM), 263–283 (FVLA…LLIA), 347–367 (AGIY…IDPL), 371–391 (FILT…GVGG), and 395–415 (FAAL…ALVI).

This sequence belongs to the dicarboxylate/amino acid:cation symporter (DAACS) (TC 2.A.23) family.

Its subcellular location is the membrane. Mediates uptake of L-cystine, the oxidized form of L-cysteine. The polypeptide is L-cystine uptake protein TcyP (Bacillus cereus (strain ATCC 10987 / NRS 248)).